The sequence spans 509 residues: ATP synthase subunit alpha (509 aa).

169-176 (GDRQTGKT) lines the ATP pocket.

The protein belongs to the ATPase alpha/beta chains family. In terms of assembly, F-type ATPases have 2 components, CF(1) - the catalytic core - and CF(0) - the membrane proton channel. CF(1) has five subunits: alpha(3), beta(3), gamma(1), delta(1), epsilon(1). CF(0) has three main subunits: a(1), b(2) and c(9-12). The alpha and beta chains form an alternating ring which encloses part of the gamma chain. CF(1) is attached to CF(0) by a central stalk formed by the gamma and epsilon chains, while a peripheral stalk is formed by the delta and b chains.

The protein resides in the cell inner membrane. The catalysed reaction is ATP + H2O + 4 H(+)(in) = ADP + phosphate + 5 H(+)(out). Functionally, produces ATP from ADP in the presence of a proton gradient across the membrane. The alpha chain is a regulatory subunit. The protein is ATP synthase subunit alpha of Methylobacterium sp. (strain 4-46).